A 141-amino-acid chain; its full sequence is Nucleoside diphosphate kinase (141 aa).

ATP contacts are provided by Lys11, Phe59, Arg87, Thr93, Arg104, and Asn114. The active-site Pros-phosphohistidine intermediate is the His117.

It belongs to the NDK family. In terms of assembly, homotetramer. Mg(2+) is required as a cofactor.

Its subcellular location is the cytoplasm. The enzyme catalyses a 2'-deoxyribonucleoside 5'-diphosphate + ATP = a 2'-deoxyribonucleoside 5'-triphosphate + ADP. It catalyses the reaction a ribonucleoside 5'-diphosphate + ATP = a ribonucleoside 5'-triphosphate + ADP. Major role in the synthesis of nucleoside triphosphates other than ATP. The ATP gamma phosphate is transferred to the NDP beta phosphate via a ping-pong mechanism, using a phosphorylated active-site intermediate. The chain is Nucleoside diphosphate kinase from Polaromonas naphthalenivorans (strain CJ2).